The chain runs to 303 residues: Protease HtpX (303 aa).

A run of 2 helical transmembrane segments spans residues 4 to 24 (IGLF…VFGI) and 42 to 62 (IASL…ISLF). Residue H149 coordinates Zn(2+). Residue E150 is part of the active site. A Zn(2+)-binding site is contributed by H153. 2 helical membrane-spanning segments follow: residues 157-177 (GDMV…MFFA) and 200-220 (FVTS…IVMW). Residue E226 participates in Zn(2+) binding.

It belongs to the peptidase M48B family. The cofactor is Zn(2+).

Its subcellular location is the cell inner membrane. The polypeptide is Protease HtpX (Psychrobacter sp. (strain PRwf-1)).